The following is a 214-amino-acid chain: Redox-sensing transcriptional repressor Rex (214 aa).

The H-T-H motif DNA-binding region spans 17 to 56 (LYYRIFKRFHADQVEKASSKQIADAMGIDSATVRRDFSYF). 91–96 (GCGNIG) contributes to the NAD(+) binding site.

The protein belongs to the transcriptional regulatory Rex family. As to quaternary structure, homodimer.

It is found in the cytoplasm. Its function is as follows. Modulates transcription in response to changes in cellular NADH/NAD(+) redox state. The sequence is that of Redox-sensing transcriptional repressor Rex from Streptococcus pyogenes serotype M12 (strain MGAS9429).